The primary structure comprises 98 residues: Large ribosomal subunit protein mL53 (98 aa).

Belongs to the mitochondrion-specific ribosomal protein mL53 family. In terms of assembly, component of the mitochondrial large ribosomal subunit (mt-LSU). Mature yeast 74S mitochondrial ribosomes consist of a small (37S) and a large (54S) subunit. The 37S small subunit contains a 15S ribosomal RNA (15S mt-rRNA) and 34 different proteins. The 54S large subunit contains a 21S rRNA (21S mt-rRNA) and 46 different proteins.

Its subcellular location is the mitochondrion. Component of the mitochondrial ribosome (mitoribosome), a dedicated translation machinery responsible for the synthesis of mitochondrial genome-encoded proteins, including at least some of the essential transmembrane subunits of the mitochondrial respiratory chain. The mitoribosomes are attached to the mitochondrial inner membrane and translation products are cotranslationally integrated into the membrane. This is Large ribosomal subunit protein mL53 (MRPL44) from Saccharomyces cerevisiae (strain ATCC 204508 / S288c) (Baker's yeast).